We begin with the raw amino-acid sequence, 249 residues long: Phosphoserine phosphatase (249 aa).

The protein belongs to the HAD-like hydrolase superfamily. In terms of assembly, homodimer. Mg(2+) serves as cofactor. Co(2+) is required as a cofactor.

It catalyses the reaction O-phospho-L-serine + H2O = L-serine + phosphate. It carries out the reaction O-phospho-D-serine + H2O = D-serine + phosphate. Its pathway is amino-acid biosynthesis; L-serine biosynthesis; L-serine from 3-phospho-D-glycerate: step 3/3. In terms of biological role, catalyzes the last step of the phosphorylated serine biosynthetic pathway, i.e. dephosphorylation of O-phospho-L-serine to form L-serine. Is also able to dephosphorylate O-phospho-D-serine with similar efficiency. Displays a poor activity on L-phosphothreonine, and cannot use L-phosphotyrosine, pyridoxal phosphate, glucose 6-phosphate, or fructose 6-phosphate as substrates. The chain is Phosphoserine phosphatase from Thermus thermophilus (strain ATCC BAA-163 / DSM 7039 / HB27).